The primary structure comprises 227 residues: PKHD-type hydroxylase Bxeno_B2756 (227 aa).

Residues Gln80–Ser179 form the Fe2OG dioxygenase domain. Residues His98, Asp100, and His160 each coordinate Fe cation. Arg170 lines the 2-oxoglutarate pocket.

Fe(2+) serves as cofactor. The cofactor is L-ascorbate.

This chain is PKHD-type hydroxylase Bxeno_B2756, found in Paraburkholderia xenovorans (strain LB400).